The following is a 300-amino-acid chain: Acetylglutamate kinase (300 aa).

Residues 73-74, Arg95, and Asn197 each bind substrate; that span reads GG.

This sequence belongs to the acetylglutamate kinase family. ArgB subfamily.

The protein localises to the cytoplasm. It catalyses the reaction N-acetyl-L-glutamate + ATP = N-acetyl-L-glutamyl 5-phosphate + ADP. It participates in amino-acid biosynthesis; L-arginine biosynthesis; N(2)-acetyl-L-ornithine from L-glutamate: step 2/4. Catalyzes the ATP-dependent phosphorylation of N-acetyl-L-glutamate. This chain is Acetylglutamate kinase, found in Polynucleobacter asymbioticus (strain DSM 18221 / CIP 109841 / QLW-P1DMWA-1) (Polynucleobacter necessarius subsp. asymbioticus).